The sequence spans 353 residues: NADH-quinone oxidoreductase subunit H (353 aa).

Transmembrane regions (helical) follow at residues 8–28, 75–95, 108–128, 148–168, 179–199, 229–249, 258–278, 297–317, and 319–339; these read LLVY…IFIW, GVFW…FAAI, IGIL…FMAG, VSYE…TGSL, VPFI…AMAE, LFYL…TTLF, LHPV…IIWV, FLLP…LIAP, and INTA…VLLF.

The protein belongs to the complex I subunit 1 family. In terms of assembly, NDH-1 is composed of 14 different subunits. Subunits NuoA, H, J, K, L, M, N constitute the membrane sector of the complex.

The protein resides in the cell membrane. The catalysed reaction is a quinone + NADH + 5 H(+)(in) = a quinol + NAD(+) + 4 H(+)(out). Functionally, NDH-1 shuttles electrons from NADH, via FMN and iron-sulfur (Fe-S) centers, to quinones in the respiratory chain. The immediate electron acceptor for the enzyme in this species is believed to be ubiquinone. Couples the redox reaction to proton translocation (for every two electrons transferred, four hydrogen ions are translocated across the cytoplasmic membrane), and thus conserves the redox energy in a proton gradient. This subunit may bind ubiquinone. The sequence is that of NADH-quinone oxidoreductase subunit H from Dehalococcoides mccartyi (strain CBDB1).